The chain runs to 369 residues: DNA replication and repair protein RecF (369 aa).

30 to 37 (GDNGSGKT) contacts ATP.

The protein belongs to the RecF family.

It localises to the cytoplasm. Functionally, the RecF protein is involved in DNA metabolism; it is required for DNA replication and normal SOS inducibility. RecF binds preferentially to single-stranded, linear DNA. It also seems to bind ATP. This is DNA replication and repair protein RecF from Pseudomonas paraeruginosa (strain DSM 24068 / PA7) (Pseudomonas aeruginosa (strain PA7)).